The sequence spans 488 residues: Probable cytochrome P450 6u1 (488 aa).

Residue Cys430 participates in heme binding.

This sequence belongs to the cytochrome P450 family. The cofactor is heme.

The protein resides in the endoplasmic reticulum membrane. Its subcellular location is the microsome membrane. In terms of biological role, may be involved in the metabolism of insect hormones and in the breakdown of synthetic insecticides. The sequence is that of Probable cytochrome P450 6u1 (Cyp6u1) from Drosophila melanogaster (Fruit fly).